Here is a 132-residue protein sequence, read N- to C-terminus: CLAVATA3/ESR (CLE)-related protein 2-B (132 aa).

The N-terminal stretch at 1–26 (MASRMGMVAILSLFVCALVASTSVNA) is a signal peptide. Residues 68-132 (NRASKQLDRE…IGPPPFLDRY (65 aa)) are disordered. Pro82 and Pro85 each carry hydroxyproline. The O-linked (Ara...) hydroxyproline glycan is linked to Pro85.

It belongs to the CLV3/ESR signal peptide family. In terms of processing, the O-glycosylation (arabinosylation) of the hydroxyproline Pro-85 enhances binding affinity of the ESR2Bp peptide for its receptor. As to expression, seed endosperm.

It localises to the secreted. It is found in the extracellular space. In terms of biological role, extracellular signal peptide that regulates cell fate. The chain is CLAVATA3/ESR (CLE)-related protein 2-B from Zea mays (Maize).